The chain runs to 136 residues: Inner membrane protein YbhQ (136 aa).

Topologically, residues 1–12 (MKWQQRVRVATG) are cytoplasmic. A helical membrane pass occupies residues 13–33 (LSCWQIMLHLLVVALLVVGWM). Topologically, residues 34–37 (SKTL) are periplasmic. Residues 38–58 (VHVGVGLCALYCVTVVMMLVF) traverse the membrane as a helical segment. Residues 59–71 (QRHPEQRWREVAD) lie on the Cytoplasmic side of the membrane. Residues 72 to 92 (VLEELTTTWYFGAALIVLWLL) form a helical membrane-spanning segment. Over 93-99 (SRVLENN) the chain is Periplasmic. The helical transmembrane segment at 100–120 (FLLAIAGLAILAGPAVVSLLA) threads the bilayer. At 121 to 136 (KDKKLHHLTSKHRVRR) the chain is on the cytoplasmic side.

It localises to the cell inner membrane. The chain is Inner membrane protein YbhQ (ybhQ) from Escherichia coli O157:H7.